The primary structure comprises 853 residues: Leucine--tRNA ligase (853 aa).

Positions 42–52 (PYPSGNLHMGH) match the 'HIGH' region motif. A 'KMSKS' region motif is present at residues 615 to 619 (KMSKS). K618 contributes to the ATP binding site.

Belongs to the class-I aminoacyl-tRNA synthetase family.

The protein localises to the cytoplasm. It catalyses the reaction tRNA(Leu) + L-leucine + ATP = L-leucyl-tRNA(Leu) + AMP + diphosphate. This is Leucine--tRNA ligase from Crocosphaera subtropica (strain ATCC 51142 / BH68) (Cyanothece sp. (strain ATCC 51142)).